The primary structure comprises 1978 residues: Protein MOR1 (1978 aa).

2 HEAT repeats span residues 48-86 (DPRLRDFGHLFRKTVADSNAPVQEKALDALIAFLRAADS) and 165-202 (IPPKRILKMLPELFDHQDQNVRASAKGVTLELCRWIGK). Residues 230–264 (AGAKPTRKIRSEQDKEPEAEASSDVVGDGPSEEAV) form a disordered region. Basic and acidic residues predominate over residues 238–247 (IRSEQDKEPE). HEAT repeat units follow at residues 322–359 (GDFSEICRTLKKLITDVNLAVAVEAIQAIGNLACGLRT), 363–400 (ASSRFMLPVLLEKLKEKKQSVTDPLTQTLQTMYKAGCL), and 442–479 (KAHKEYVPLCMECLNDGTPDVRDAAFSALAAIAKSVGM). Residues 501–587 (IAGSGGGDQA…SVEPPEDVEP (87 aa)) form a disordered region. A compositionally biased stretch (low complexity) spans 510 to 527 (AGTSSVTVQSSVGSTATG). Positions 565–577 (GKKDGSVRNEGSK) are enriched in basic and acidic residues. HEAT repeat units follow at residues 849 to 886 (DISTKITPNLLKGFESPDWKMRLESIEAVNKILEEANK), 890 to 928 (PTGTGELFGGLRGRLLDSNKNLVMQTLTTIGGVAAAMGP), 932 to 969 (KASKGILSDVLKCLGDNKKHMRECTLAALDLWLGAVHL), and 1008 to 1045 (VDAIHLLKPASTAMTDKSADVRKAAEGCISEILRVSGQ). The disordered stretch occupies residues 1087-1115 (SKGVTKISKSTSNGTLKQGNRSRAVPTKG). A compositionally biased stretch (polar residues) spans 1093-1107 (ISKSTSNGTLKQGNR). HEAT repeat units follow at residues 1230 to 1253 (LKVLEFLPELFNTLRDEEYCMTEA), 1254 to 1286 (EAAIFLPCLAEKLGHNIEKVREKMRELMKQIIQ), 1287 to 1325 (AYSVGKTYPYILEGLRSKNNRTRIECTDLIGYLLETCGT), and 1328 to 1365 (GGLLKYLNIVASLTAERDGELRKAALNTMATGYQILGA). Residues 1393-1403 (MEKRREGKPGE) show a composition bias toward basic and acidic residues. The disordered stretch occupies residues 1393–1431 (MEKRREGKPGEARAALRRSVRDSGPEVAEQSGDISQTVP). The HEAT 14 repeat unit spans residues 1535 to 1575 (RSCKYVLNTLMQTFQNKKLAHAVKEGTLESLITELLLWLLD). Residues 1837 to 1862 (AAAGRTPSSLPLSTPPPSSLALPSPD) are disordered.

The protein belongs to the TOG/XMAP215 family. In terms of tissue distribution, expressed in roots, cotyledons, rosette leaves, stems, open flowers and green siliques.

It localises to the cytoplasm. The protein localises to the cytoskeleton. The protein resides in the phragmoplast. It is found in the spindle. In terms of biological role, microtubule-binding protein that is essential for cortical microtubules organization and function. Essential for maintaining the interphase cortical array and for correct morphogenesis. Promotes rapid growth and shrinkage of microtubules and suppresses the pausing of interphase microtubules. Regulates the structure and function of microtubule arrays during mitosis and cytokinesis. Probably not required for cellulose microfibrils alignment in roots. The chain is Protein MOR1 (MOR1) from Arabidopsis thaliana (Mouse-ear cress).